The primary structure comprises 493 residues: MSFKDLRSFISHLEANGELKRISHPVDPHLEMTEIADRVLRAKGPALLFENPVGNEMPVLANLFGTPKRVAMALGKEDPLALREVGELLAFLKEPEPPRGFKDAISKIPMFKQALNMPPKTVRNAPCQEVIKTGSDVDLTKLPIQHCWPGDVAPLVTWGLTITKGPRQKRQNLGIYRQQLLDKDKLIMRWLDHRGGALDFKDFKEKFPGERYPVVVALGADPVTILGAVTPVPDSMSEYAFAGLLRGERTDVCKAISCDLEVPATSEIILEGYIDPEEMAEEGPYGDHTGYYNETDKFPVFTVTHITHRKDAIYHSTYTGRPPDEPAMLGVALNEIFVPILRKQYPEIIDFYLPPEGCSYRMAVISIRKEYPGHAKRVMMGAWSFLRQFMYTKFIIIVDEDVNCRDWNDVIWAITTRMDPKRDTVMIENTPIDYLDFASPVAGLGSKMGMDATNKWEGETDREWGTPIVMDEAVKQRIDTIWDDLGIDDAPTL.

N172 contributes to the Mn(2+) binding site. Residues 175–177, 189–191, and 194–195 contribute to the prenylated FMN site; these read IYR, RWL, and RG. Position 238 (E238) interacts with Mn(2+). D287 serves as the catalytic Proton donor.

This sequence belongs to the UbiD family. In terms of assembly, homohexamer. Prenylated FMN serves as cofactor. It depends on Mn(2+) as a cofactor.

Its subcellular location is the cell membrane. It catalyses the reaction a 4-hydroxy-3-(all-trans-polyprenyl)benzoate + H(+) = a 2-(all-trans-polyprenyl)phenol + CO2. It participates in cofactor biosynthesis; ubiquinone biosynthesis. Catalyzes the decarboxylation of 3-octaprenyl-4-hydroxy benzoate to 2-octaprenylphenol, an intermediate step in ubiquinone biosynthesis. This Shewanella sediminis (strain HAW-EB3) protein is 3-octaprenyl-4-hydroxybenzoate carboxy-lyase.